A 323-amino-acid polypeptide reads, in one-letter code: L-lactate dehydrogenase (323 aa).

Residues Val16, Asn37, and 81 to 82 (GA) contribute to the NAD(+) site. Residues Gln84, Arg90, and 122-125 (NPVD) contribute to the substrate site. NAD(+) contacts are provided by residues 120–122 (ATN) and Ser145. Residue 150 to 153 (DSAR) coordinates substrate. Catalysis depends on His177, which acts as the Proton acceptor. At Tyr221 the chain carries Phosphotyrosine. Position 230 (Thr230) interacts with substrate.

It belongs to the LDH/MDH superfamily. LDH family. In terms of assembly, homotetramer.

The protein localises to the cytoplasm. The enzyme catalyses (S)-lactate + NAD(+) = pyruvate + NADH + H(+). Its pathway is fermentation; pyruvate fermentation to lactate; (S)-lactate from pyruvate: step 1/1. In terms of biological role, catalyzes the conversion of lactate to pyruvate. This chain is L-lactate dehydrogenase, found in Limosilactobacillus reuteri (Lactobacillus reuteri).